A 96-amino-acid polypeptide reads, in one-letter code: Protein Vpr (96 aa).

Residues 1–42 (MEQAPEDQGPQREPYNQWALELLEELKNEAVRHFPRIWLHGL) form a homooligomerization region. Phosphoserine; by host is present on residues Ser79, Ser94, and Ser96.

The protein belongs to the HIV-1 VPR protein family. As to quaternary structure, homooligomer, may form homodimer. Interacts with p6-gag region of the Pr55 Gag precursor protein through a (Leu-X-X)4 motif near the C-terminus of the P6gag protein. Interacts with host UNG. May interact with host RAD23A/HHR23A. Interacts with host VPRBP/DCAF1, leading to hijack the CUL4A-RBX1-DDB1-DCAF1/VPRBP complex, mediating ubiquitination of host proteins such as TERT and ZGPAT and arrest of the cell cycle in G2 phase. Post-translationally, phosphorylated on several residues by host. These phosphorylations regulate VPR activity for the nuclear import of the HIV-1 pre-integration complex.

The protein localises to the virion. Its subcellular location is the host nucleus. It localises to the host extracellular space. Functionally, during virus replication, may deplete host UNG protein, and incude G2-M cell cycle arrest. Acts by targeting specific host proteins for degradation by the 26S proteasome, through association with the cellular CUL4A-DDB1 E3 ligase complex by direct interaction with host VPRPB/DCAF-1. Cell cycle arrest reportedly occurs within hours of infection and is not blocked by antiviral agents, suggesting that it is initiated by the VPR carried into the virion. Additionally, VPR induces apoptosis in a cell cycle dependent manner suggesting that these two effects are mechanistically linked. Detected in the serum and cerebrospinal fluid of AIDS patient, VPR may also induce cell death to bystander cells. In terms of biological role, during virus entry, plays a role in the transport of the viral pre-integration (PIC) complex to the host nucleus. This function is crucial for viral infection of non-dividing macrophages. May act directly at the nuclear pore complex, by binding nucleoporins phenylalanine-glycine (FG)-repeat regions. The polypeptide is Protein Vpr (Human immunodeficiency virus type 1 group M subtype B (isolate MN) (HIV-1)).